The primary structure comprises 378 residues: Outer membrane protein (378 aa).

The signal sequence occupies residues 1-22 (MRLRTALLATTLMAAAPVAANA). The 121-residue stretch at 258–378 (PPAPTPARTY…QNRRVEIILH (121 aa)) folds into the OmpA-like domain.

The protein localises to the cell outer membrane. Functionally, growth enhancer. This chain is Outer membrane protein, found in Gluconacetobacter diazotrophicus (strain ATCC 49037 / DSM 5601 / CCUG 37298 / CIP 103539 / LMG 7603 / PAl5).